The sequence spans 90 residues: Darcynin 1 (90 aa).

This sequence belongs to the darcynin family.

In Acinetobacter baumannii (strain ATCC 17978 / DSM 105126 / CIP 53.77 / LMG 1025 / NCDC KC755 / 5377), this protein is Darcynin 1.